The sequence spans 70 residues: DNA gyrase inhibitor YacG (70 aa).

Cys9, Cys12, Cys28, and Cys32 together coordinate Zn(2+). A disordered region spans residues 43–70 (ESRKIPGSSIDPESIVTSNNKQDNVDEQ).

This sequence belongs to the DNA gyrase inhibitor YacG family. Interacts with GyrB. The cofactor is Zn(2+).

In terms of biological role, inhibits all the catalytic activities of DNA gyrase by preventing its interaction with DNA. Acts by binding directly to the C-terminal domain of GyrB, which probably disrupts DNA binding by the gyrase. The chain is DNA gyrase inhibitor YacG from Legionella pneumophila (strain Lens).